We begin with the raw amino-acid sequence, 354 residues long: Serum paraoxonase/lactonase 3 (354 aa).

Residues cysteine 42 and cysteine 352 are joined by a disulfide bond. Asparagine 50 is a glycosylation site (N-linked (GlcNAc...) asparagine). Ca(2+) contacts are provided by glutamate 53 and aspartate 54. Histidine 114 serves as the catalytic Proton acceptor. Isoleucine 116 provides a ligand contact to Ca(2+). Residue serine 165 is modified to Phosphoserine. Asparagine 167, asparagine 168, asparagine 223, aspartate 268, and asparagine 269 together coordinate Ca(2+). N-linked (GlcNAc...) asparagine glycosylation is present at asparagine 269.

The protein belongs to the paraoxonase family. In terms of assembly, homodimer. Ca(2+) serves as cofactor. In terms of processing, glycosylated. Post-translationally, the signal sequence is not cleaved.

It localises to the secreted. The protein resides in the extracellular space. It catalyses the reaction a phenyl acetate + H2O = a phenol + acetate + H(+). The catalysed reaction is An aryl dialkyl phosphate + H2O = dialkyl phosphate + an aryl alcohol.. It carries out the reaction an N-acyl-L-homoserine lactone + H2O = an N-acyl-L-homoserine + H(+). In terms of biological role, has low activity towards the organophosphate paraxon and aromatic carboxylic acid esters. Rapidly hydrolyzes lactones such as statin prodrugs (e.g. lovastatin). Hydrolyzes aromatic lactones and 5- or 6-member ring lactones with aliphatic substituents but not simple lactones or those with polar substituents. The polypeptide is Serum paraoxonase/lactonase 3 (PON3) (Oryctolagus cuniculus (Rabbit)).